Reading from the N-terminus, the 474-residue chain is DNA-binding protein (474 aa).

The segment at 1-34 (MAGRQREHPTVTPYLQETSPERPPPLPPKKKLRK) is disordered. Y142 is modified (phosphotyrosine; by host). Zn(2+)-binding residues include C231 and H233. Residues 244–278 (VEVDVGSENGQRALKEQPSKTKVVQNRWGRSVVQI) form a flexible loop region. Positions 286, 302, 343, 345, 397, and 413 each coordinate Zn(2+). Positions 460–474 (VALPTGHGDAEVEPF) are C-terminal arm, DBP binding.

The protein belongs to the adenoviridae E2A DNA-binding protein family. As to quaternary structure, homomultimerizes on viral ssDNA bound to pTP. Forms a initiation complex with viral polymerase, pTP and hosts NFIA and POU2F1/OCT1. Interacts with host SRCAP.

It localises to the host nucleus. Plays a role in the elongation phase of viral strand displacement replication by unwinding the template in an ATP-independent fashion, employing its capacity to form multimers. Also enhances the rate of initiation. Released from template upon second strand synthesis. Assembles in complex with viral pTP, viral pol, host NFIA and host POU2F1/OCT1 on viral origin of replication. Covers the whole ssDNA genome during synthesis. The complementary strand synthesis induces its relese from DNA template. May inhibit cellular transcription mediated by the interaction between host SRCAP and CBP. In Homo sapiens (Human), this protein is DNA-binding protein.